We begin with the raw amino-acid sequence, 374 residues long: 4-galactosyl-N-acetylglucosaminide 3-alpha-L-fucosyltransferase FUT5 (374 aa).

Residues 1 to 15 (MDLLGAAKPQWPWRR) lie on the Cytoplasmic side of the membrane. A helical; Signal-anchor for type II membrane protein transmembrane segment spans residues 16-34 (CLAGLLFQLLVAVCFFSYL). Topologically, residues 35–374 (RVSRDDATGS…TVRSIAAWFN (340 aa)) are lumenal. 4 N-linked (GlcNAc...) asparagine glycosylation sites follow: asparagine 60, asparagine 105, asparagine 167, and asparagine 198.

Belongs to the glycosyltransferase 10 family.

Its subcellular location is the golgi apparatus. The protein resides in the golgi stack membrane. It carries out the reaction a beta-D-galactosyl-(1-&gt;3)-N-acetyl-beta-D-glucosaminyl derivative + GDP-beta-L-fucose = a beta-D-galactosyl-(1-&gt;3)-[alpha-L-fucosyl-(1-&gt;4)]-N-acetyl-beta-D-glucosaminyl derivative + GDP + H(+). The enzyme catalyses an N-acetyl-alpha-neuraminyl-(2-&gt;3)-beta-D-galactosyl-(1-&gt;4)-N-acetyl-beta-D-glucosaminyl derivative + GDP-beta-L-fucose = an alpha-Neu5Ac-(2-&gt;3)-beta-D-Gal-(1-&gt;4)-[alpha-L-Fuc-(1-&gt;3)]-beta-D-GlcNAc derivative + GDP + H(+). It catalyses the reaction an alpha-Neu5Ac-(2-&gt;3)-beta-D-Gal-(1-&gt;4)-beta-D-GlcNAc-(1-&gt;3)-beta-D-Gal-(1-&gt;4)-[alpha-L-Fuc-(1-&gt;3)]-beta-D-GlcNAc derivative + GDP-beta-L-fucose = an alpha-Neu5Ac-(2-&gt;3)-beta-D-Gal-(1-&gt;4)-[alpha-L-Fuc-(1-&gt;3)]-beta-D-GlcNAc-(1-&gt;3)-beta-D-Gal-(1-&gt;4)-[alpha-L-Fuc-(1-&gt;3)]-beta-D-GlcNAc derivative + GDP + H(+). The catalysed reaction is a beta-D-galactosyl-(1-&gt;4)-N-acetyl-beta-D-glucosaminyl derivative + GDP-beta-L-fucose = a beta-D-galactosyl-(1-&gt;4)-[alpha-L-fucosyl-(1-&gt;3)]-N-acetyl-beta-D-glucosaminyl derivative + GDP + H(+). It carries out the reaction a neolactoside nLc4Cer + GDP-beta-L-fucose = a neolactoside III(3)-alpha-Fuc-nLc4Cer + GDP + H(+). The enzyme catalyses a neolactoside nLc6Cer + GDP-beta-L-fucose = beta-D-galactosyl-(1-&gt;4)-N-acetyl-beta-D-glucosaminyl-(1-&gt;3)-beta-D-galactosyl-(1-&gt;4)-[alpha-L-fucosyl-(1-&gt;3)]-N-acetyl-beta-D-glucosaminyl-(1-&gt;3)-beta-D-galactosyl-(1-&gt;4)-beta-D-glucosyl-(1&lt;-&gt;1')-ceramide + GDP + H(+). It catalyses the reaction a neolactoside nLc6Cer(d18:1(4E)) + GDP-beta-L-fucose = a neolactoside III(3)-alpha-Fuc-nLc6Cer(d18:1(4E)) + GDP + H(+). The catalysed reaction is a neolactoside nLc4Cer(d18:1(4E)) + GDP-beta-L-fucose = a neolactoside III(3)-alpha-Fuc-nLc4Cer(d18:1(4E)) + GDP + H(+). It carries out the reaction a neolactoside VI(3)-alpha-NeuNAc-nLc6Cer + GDP-beta-L-fucose = a neolactoside VI(3)-alpha-NeuAc,III(3)-alphaFuc-nLc6Cer + GDP + H(+). The enzyme catalyses beta-D-galactosyl-(1-&gt;4)-N-acetyl-D-glucosamine + GDP-beta-L-fucose = beta-D-galactosyl-(1-&gt;4)-[alpha-L-fucosyl-(1-&gt;3)]-N-acetyl-D-glucosamine + GDP + H(+). It catalyses the reaction N-acetyl-alpha-neuraminosyl-(2-&gt;3)-beta-D-galactosyl-(1-&gt;4)-N-acetyl-beta-D-glucosamine + GDP-beta-L-fucose = N-acetyl-alpha-neuraminosyl-(2-&gt;3)-beta-D-galactosyl-(1-&gt;4)-[alpha-L-fucosyl-(1-&gt;3)]-N-acetyl-beta-D-glucosamine + GDP + H(+). The catalysed reaction is alpha-L-Fuc-(1-&gt;2)-beta-D-Gal-(1-&gt;4)-D-GlcNAc + GDP-beta-L-fucose = alpha-L-Fuc-(1-&gt;2)-beta-D-Gal-(1-&gt;4)-[alpha-L-Fuc-(1-&gt;3)]-D-GlcNAc + GDP + H(+). It carries out the reaction an alpha-Neu5Ac-(2-&gt;3)-beta-D-Gal-(1-&gt;3)-D-GlcNAc derivative + GDP-beta-L-fucose = an alpha-Neu5Ac-(2-&gt;3)-beta-D-Gal-(1-&gt;3)-[alpha-L-Fuc-(1-&gt;4)]-beta-D-GlcNAc derivative + GDP + H(+). The protein operates within protein modification; protein glycosylation. Catalyzes preferentially the transfer of L-fucose, from a guanosine diphosphate-beta-L-fucose, to the N-acetyl-beta-D-glucosamine (GlcNAc) of an N-acetyllactosamine unit (type 2 chain) of an oligosaccharide, or a glycoprotein- and a glycolipid-linked N-acetyllactosamine unit via an alpha (1,3) linkage and participates in the surface expression of VIM-2, Lewis X/SSEA-1 and sialyl Lewis X antigens. Preferentially transfers fucose to the GlcNAc of an internal N-acetyllactosamine unit of a poly-N-acetyllactosamine chain acceptor substrate. Also catalyzes to a lesser extend the transfer of L-fucose to the GlcNAc of a type 1 (beta-D-galactosyl-(1-&gt;3)-N-acetyl-beta-D-glucosaminyl) or H-type 1 (alpha-L-Fuc-(1-&gt;2)-beta-D-Gal-(1-&gt;3)-D-GlcNAc) chain oligosaccharide via an alpha (1,4) linkage. Preferentially catalyzes sialylated type 2 oligosaccharide acceptors over neutral type 2 or H type 2 (alpha-L-Fuc-(1-&gt;2)-beta-D-Gal-(1-&gt;4)-D-GlcNAc) oligosaccharide acceptors. Lactose-based structures are also acceptor substrates. In Hylobates lar (Lar gibbon), this protein is 4-galactosyl-N-acetylglucosaminide 3-alpha-L-fucosyltransferase FUT5.